A 447-amino-acid chain; its full sequence is Gastrin/cholecystokinin type B receptor (447 aa).

At 1–57 (MELLKLNRSVQGTGPGPGASLCRPGAPLLNSSSVGNLSCEPPRIRGAGTRELELAIR) the chain is on the extracellular side. Asparagine 7, asparagine 30, and asparagine 36 each carry an N-linked (GlcNAc...) asparagine glycan. The chain crosses the membrane as a helical span at residues 58 to 79 (ITLYAVIFLMSVGGNMLIIVVL). At 80-87 (GLSRRLRT) the chain is on the cytoplasmic side. The chain crosses the membrane as a helical span at residues 88 to 109 (VTNAFLLSLAVSDLLLAVACMP). Over 110-131 (FTLLPNLMGTFIFGTVICKAVS) the chain is Extracellular. Cysteine 127 and cysteine 205 are disulfide-bonded. A helical transmembrane segment spans residues 132-150 (YLMGVSVSVSTLSLVAIAL). Residues 151–170 (ERYSAICRPLQARVWQTRSH) are Cytoplasmic-facing. The chain crosses the membrane as a helical span at residues 171 to 189 (AARVIVATWLLSGLLMVPY). At 190–219 (PVYTVVQPVGPRVLQCVHRWPSARVRQTWS) the chain is on the extracellular side. A helical membrane pass occupies residues 220-242 (VLLLLLLFFIPGVVMAVAYGLIS). At 243 to 333 (RELYLGLRFD…KLLAKKRVVR (91 aa)) the chain is on the cytoplasmic side. A disordered region spans residues 258 to 285 (DSQSRVRNQGGLPGAVHQNGRCRPETGA). The helical transmembrane segment at 334-355 (MLLVIVVLFFLCWLPVYSANTW) threads the bilayer. Residues 356-373 (RAFDGPGAHRALSGAPIS) lie on the Extracellular side of the membrane. Residues 374–394 (FIHLLSYASACVNPLVYCFMH) form a helical membrane-spanning segment. The Cytoplasmic segment spans residues 395–447 (RRFRQACLETCARCCPRPPRARPRALPDEDPPTPSIASLSRLSYTTISTLGPG). The S-palmitoyl cysteine moiety is linked to residue cysteine 408.

This sequence belongs to the G-protein coupled receptor 1 family. As to expression, isoform 1 is expressed in brain, pancreas, stomach, the colon cancer cell line LoVo and the T-lymphoblastoma Jurkat, but not in heart, placenta, liver, lung, skeletal muscle, kidney or the stomach cancer cell line AGS. Expressed at high levels in the small cell lung cancer cell line NCI-H510, at lower levels in NCI-H345, NCI-H69 and GLC-28 cell lines, not expressed in GLC-19 cell line. Within the stomach, expressed at high levels in the mucosa of the gastric fundus and at low levels in the antrum and duodenum. Isoform 2 is present in pancreatic cancer cells and colorectal cancer cells, but not in normal pancreas or colonic mucosa. Isoform 3 is expressed in brain, pancreas, stomach, the stomach cancer cell line AGS and the colon cancer cell line LoVo.

The protein resides in the cell membrane. Its function is as follows. Receptor for gastrin and cholecystokinin. The CCK-B receptors occur throughout the central nervous system where they modulate anxiety, analgesia, arousal, and neuroleptic activity. This receptor mediates its action by association with G proteins that activate a phosphatidylinositol-calcium second messenger system. Isoform 2 is constitutively activated and may regulate cancer cell proliferation via a gastrin-independent mechanism. This is Gastrin/cholecystokinin type B receptor from Homo sapiens (Human).